A 312-amino-acid chain; its full sequence is MDGILILDKSPGKTSQKVVQEVKRILGVRKAGHAGTLDPLATGVLPLCLNEATKLVQFLSLDDKEYRATMLLGVTTETMDIEGRITDRREPEVDEVRIREALQFFTGPISQEPPRYSAVKFKGRPLYSWARKGVDIALPPRTVQVYSSILEEIALPYVTFRVACSKGTYIRTLCADLGERLGCGACMSVLRRLRCGCFTLETAVSLEDIADGKGRETLLSRVIPLSDGLRNVAAIEISEELSGRIRDGFQPDGSTLREYHIPSLADGDMVKFLTSSGGLVAVARFLYASDQLAVSDMGQPAVRILRVFHDRA.

Catalysis depends on aspartate 38, which acts as the Nucleophile.

This sequence belongs to the pseudouridine synthase TruB family. Type 1 subfamily.

It carries out the reaction uridine(55) in tRNA = pseudouridine(55) in tRNA. Responsible for synthesis of pseudouridine from uracil-55 in the psi GC loop of transfer RNAs. The protein is tRNA pseudouridine synthase B of Syntrophus aciditrophicus (strain SB).